The following is a 152-amino-acid chain: UPF0178 protein swp_1285 (152 aa).

The protein belongs to the UPF0178 family.

In Shewanella piezotolerans (strain WP3 / JCM 13877), this protein is UPF0178 protein swp_1285.